The chain runs to 95 residues: Integration host factor subunit beta (95 aa).

Residues 56 to 95 (RAPRTGRNPKTGETVELDGKHVPHFKPGKELRDRVNESIA) form a disordered region. Residues 72–95 (LDGKHVPHFKPGKELRDRVNESIA) are compositionally biased toward basic and acidic residues.

It belongs to the bacterial histone-like protein family. As to quaternary structure, heterodimer of an alpha and a beta chain.

Functionally, this protein is one of the two subunits of integration host factor, a specific DNA-binding protein that functions in genetic recombination as well as in transcriptional and translational control. This is Integration host factor subunit beta from Pseudoalteromonas translucida (strain TAC 125).